The chain runs to 232 residues: Ribose-5-phosphate isomerase A (232 aa).

Substrate contacts are provided by residues 28–31 (TGST), 83–86 (DGAD), and 96–99 (KGGG). Residue Glu-105 is the Proton acceptor of the active site. Lys-123 is a substrate binding site.

The protein belongs to the ribose 5-phosphate isomerase family. Homodimer.

The catalysed reaction is aldehydo-D-ribose 5-phosphate = D-ribulose 5-phosphate. It functions in the pathway carbohydrate degradation; pentose phosphate pathway; D-ribose 5-phosphate from D-ribulose 5-phosphate (non-oxidative stage): step 1/1. Catalyzes the reversible conversion of ribose-5-phosphate to ribulose 5-phosphate. This chain is Ribose-5-phosphate isomerase A, found in Rhizobium etli (strain CIAT 652).